Reading from the N-terminus, the 328-residue chain is Tetraacyldisaccharide 4'-kinase (328 aa).

Residue Thr55–Thr62 coordinates ATP.

Belongs to the LpxK family.

It carries out the reaction a lipid A disaccharide + ATP = a lipid IVA + ADP + H(+). The protein operates within glycolipid biosynthesis; lipid IV(A) biosynthesis; lipid IV(A) from (3R)-3-hydroxytetradecanoyl-[acyl-carrier-protein] and UDP-N-acetyl-alpha-D-glucosamine: step 6/6. Its function is as follows. Transfers the gamma-phosphate of ATP to the 4'-position of a tetraacyldisaccharide 1-phosphate intermediate (termed DS-1-P) to form tetraacyldisaccharide 1,4'-bis-phosphate (lipid IVA). The protein is Tetraacyldisaccharide 4'-kinase of Shigella boydii serotype 18 (strain CDC 3083-94 / BS512).